Consider the following 160-residue polypeptide: Crossover junction endodeoxyribonuclease RuvC (160 aa).

Active-site residues include D9, E68, and D141. The Mg(2+) site is built by D9, E68, and D141.

Belongs to the RuvC family. As to quaternary structure, homodimer which binds Holliday junction (HJ) DNA. The HJ becomes 2-fold symmetrical on binding to RuvC with unstacked arms; it has a different conformation from HJ DNA in complex with RuvA. In the full resolvosome a probable DNA-RuvA(4)-RuvB(12)-RuvC(2) complex forms which resolves the HJ. Mg(2+) serves as cofactor.

The protein localises to the cytoplasm. It catalyses the reaction Endonucleolytic cleavage at a junction such as a reciprocal single-stranded crossover between two homologous DNA duplexes (Holliday junction).. Functionally, the RuvA-RuvB-RuvC complex processes Holliday junction (HJ) DNA during genetic recombination and DNA repair. Endonuclease that resolves HJ intermediates. Cleaves cruciform DNA by making single-stranded nicks across the HJ at symmetrical positions within the homologous arms, yielding a 5'-phosphate and a 3'-hydroxyl group; requires a central core of homology in the junction. The consensus cleavage sequence is 5'-(A/T)TT(C/G)-3'. Cleavage occurs on the 3'-side of the TT dinucleotide at the point of strand exchange. HJ branch migration catalyzed by RuvA-RuvB allows RuvC to scan DNA until it finds its consensus sequence, where it cleaves and resolves the cruciform DNA. This chain is Crossover junction endodeoxyribonuclease RuvC, found in Campylobacter jejuni (strain RM1221).